We begin with the raw amino-acid sequence, 201 residues long: Two-component response regulator ORR10 (201 aa).

The Response regulatory domain maps to 10-142 (HVLAVDDSLP…DMSKLKPHIL (133 aa)). Residue Asp-75 is modified to 4-aspartylphosphate. Residues 149-201 (HYQQEQHLQSNSESNNSSNPTSENSSSSTSTNSHKRKAVDEEILPHTIRPRHS) are disordered. Low complexity predominate over residues 158 to 180 (SNSESNNSSNPTSENSSSSTSTN).

Belongs to the ARR family. Type-A subfamily. In terms of processing, two-component system major event consists of a His-to-Asp phosphorelay between a sensor histidine kinase (HK) and a response regulator (RR). In plants, the His-to-Asp phosphorelay involves an additional intermediate named Histidine-containing phosphotransfer protein (HPt). This multistep phosphorelay consists of a His-Asp-His-Asp sequential transfer of a phosphate group between first a His and an Asp of the HK protein, followed by the transfer to a conserved His of the HPt protein and finally the transfer to an Asp in the receiver domain of the RR protein. In terms of tissue distribution, expressed in mature leaves, and at low levels in roots, shoots and flowers.

Functionally, functions as a response regulator involved in His-to-Asp phosphorelay signal transduction system. Phosphorylation of the Asp residue in the receiver domain activates the ability of the protein to promote the transcription of target genes. Type-A response regulators seem to act as negative regulators of the cytokinin signaling. This chain is Two-component response regulator ORR10, found in Oryza sativa subsp. indica (Rice).